The chain runs to 416 residues: Gamma-glutamyl phosphate reductase (416 aa).

Belongs to the gamma-glutamyl phosphate reductase family.

The protein resides in the cytoplasm. It carries out the reaction L-glutamate 5-semialdehyde + phosphate + NADP(+) = L-glutamyl 5-phosphate + NADPH + H(+). It functions in the pathway amino-acid biosynthesis; L-proline biosynthesis; L-glutamate 5-semialdehyde from L-glutamate: step 2/2. Its function is as follows. Catalyzes the NADPH-dependent reduction of L-glutamate 5-phosphate into L-glutamate 5-semialdehyde and phosphate. The product spontaneously undergoes cyclization to form 1-pyrroline-5-carboxylate. This Streptococcus pyogenes serotype M3 (strain ATCC BAA-595 / MGAS315) protein is Gamma-glutamyl phosphate reductase.